The primary structure comprises 114 residues: Large ribosomal subunit protein bL19 (114 aa).

The protein belongs to the bacterial ribosomal protein bL19 family.

This protein is located at the 30S-50S ribosomal subunit interface and may play a role in the structure and function of the aminoacyl-tRNA binding site. The polypeptide is Large ribosomal subunit protein bL19 (rplS) (Listeria monocytogenes serovar 1/2a (strain ATCC BAA-679 / EGD-e)).